The chain runs to 54 residues: MSSGSNSGGLMSSAGLVRYFDSEDRDAIAIDPKTVLAFCVLFGVFVQILSLTVA.

Over 1 to 31 the chain is Cytoplasmic; the sequence is MSSGSNSGGLMSSAGLVRYFDSEDRDAIAID. A helical membrane pass occupies residues 32-53; that stretch reads PKTVLAFCVLFGVFVQILSLTV. A54 is a topological domain (extracellular).

This sequence belongs to the SEC61-beta family. In terms of assembly, component of the protein translocase complex. Heterotrimer consisting of alpha (SecY), beta (SecG) and gamma (SecE) subunits. Can form oligomers of the heterotrimer.

Its subcellular location is the cell membrane. Functionally, involved in protein export. The function of the beta subunit is unknown, but it may be involved in stabilization of the trimeric complex. The polypeptide is Preprotein translocase subunit SecG (Halorubrum lacusprofundi (strain ATCC 49239 / DSM 5036 / JCM 8891 / ACAM 34)).